A 459-amino-acid chain; its full sequence is Mitochondrial distribution and morphology protein 10 (459 aa).

The protein belongs to the MDM10 family. Component of the ER-mitochondria encounter structure (ERMES) or MDM complex, composed of MMM1, MDM10, MDM12 and MDM34. Associates with the mitochondrial outer membrane sorting assembly machinery SAM(core) complex.

The protein resides in the mitochondrion outer membrane. Component of the ERMES/MDM complex, which serves as a molecular tether to connect the endoplasmic reticulum and mitochondria. Components of this complex are involved in the control of mitochondrial shape and protein biogenesis and may function in phospholipid exchange. MDM10 is involved in the late assembly steps of the general translocase of the mitochondrial outer membrane (TOM complex). Functions in the TOM40-specific route of the assembly of outer membrane beta-barrel proteins, including the association of TOM40 with the receptor TOM22 and small TOM proteins. Can associate with the SAM(core) complex as well as the MDM12-MMM1 complex, both involved in late steps of the major beta-barrel assembly pathway, that is responsible for biogenesis of all outer membrane beta-barrel proteins. May act as a switch that shuttles between both complexes and channels precursor proteins into the TOM40-specific pathway. Plays a role in mitochondrial morphology and in the inheritance of mitochondria. The chain is Mitochondrial distribution and morphology protein 10 from Clavispora lusitaniae (strain ATCC 42720) (Yeast).